A 194-amino-acid chain; its full sequence is Phosphoheptose isomerase (194 aa).

An SIS domain is found at 37-194 (ISDSFKQGGK…LIEFEMAKDV (158 aa)). Residue 52-54 (NGG) coordinates substrate. The Zn(2+) site is built by His61 and Glu65. Substrate is bound by residues Glu65, 93–94 (ND), 119–121 (STS), Ser124, and Gln172. Positions 172 and 180 each coordinate Zn(2+).

The protein belongs to the SIS family. GmhA subfamily. Homotetramer. The cofactor is Zn(2+).

The protein localises to the cytoplasm. The catalysed reaction is 2 D-sedoheptulose 7-phosphate = D-glycero-alpha-D-manno-heptose 7-phosphate + D-glycero-beta-D-manno-heptose 7-phosphate. The protein operates within carbohydrate biosynthesis; D-glycero-D-manno-heptose 7-phosphate biosynthesis; D-glycero-alpha-D-manno-heptose 7-phosphate and D-glycero-beta-D-manno-heptose 7-phosphate from sedoheptulose 7-phosphate: step 1/1. Functionally, catalyzes the isomerization of sedoheptulose 7-phosphate in D-glycero-D-manno-heptose 7-phosphate. The sequence is that of Phosphoheptose isomerase from Actinobacillus succinogenes (strain ATCC 55618 / DSM 22257 / CCUG 43843 / 130Z).